The chain runs to 315 residues: GTPase Era (315 aa).

Positions 21–190 (RSGFVAIVGR…QSALEARLDP (170 aa)) constitute an Era-type G domain. The G1 stretch occupies residues 29-36 (GRPNVGKS). 29–36 (GRPNVGKS) contributes to the GTP binding site. Residues 55-59 (QTTRN) are G2. The segment at 76-79 (DTPG) is G3. GTP contacts are provided by residues 76–80 (DTPGI) and 138–141 (NKQD). Residues 138-141 (NKQD) are G4. The interval 169–171 (FSA) is G5. A KH type-2 domain is found at 221–297 (TRQEVPHSVA…YLKLFVKVEP (77 aa)).

Belongs to the TRAFAC class TrmE-Era-EngA-EngB-Septin-like GTPase superfamily. Era GTPase family. Monomer.

The protein resides in the cytoplasm. Its subcellular location is the cell inner membrane. An essential GTPase that binds both GDP and GTP, with rapid nucleotide exchange. Plays a role in 16S rRNA processing and 30S ribosomal subunit biogenesis and possibly also in cell cycle regulation and energy metabolism. This Synechocystis sp. (strain ATCC 27184 / PCC 6803 / Kazusa) protein is GTPase Era.